We begin with the raw amino-acid sequence, 255 residues long: MTLRTENLTVSYGTDKVLNDVSLSLPTGKITALIGPNGCGKSTLLNCFSRLLMPQSGTVFLGDNPINMLSSRQLARRLSLLPQHHLTPEGITVQELVSYGRNPWLSLWGRLSAEDNARVNVAMNQTRINHLAVRRLTELSGGQRQRAFLAMVLAQNTPVVLLDEPTTYLDINHQVDLMRLMGELRTQGKTVVAVLHDLNQASRYCDQLVVMANGHVMAQGTPEEVMTPGLLRTVFSVEAEIHPEPVSGRPMCLMR.

The 236-residue stretch at 3-238 (LRTENLTVSY…GLLRTVFSVE (236 aa)) folds into the ABC transporter domain. 35–42 (GPNGCGKS) is a binding site for ATP.

The protein belongs to the ABC transporter superfamily. The complex is composed of two ATP-binding proteins (FecE), two transmembrane proteins (FecC and FecD) and a solute-binding protein (FecB).

Its subcellular location is the cell inner membrane. It carries out the reaction iron(III) dicitrate(out) + ATP + H2O = iron(III) dicitrate(in) + ADP + phosphate + H(+). Its function is as follows. Part of the ABC transporter complex FecBCDE involved in citrate-dependent Fe(3+) uptake. Binds ATP. Probably responsible for energy coupling to the transport system. This Escherichia coli (strain K12) protein is Fe(3+) dicitrate transport ATP-binding protein FecE.